A 765-amino-acid polypeptide reads, in one-letter code: E3 ubiquitin-protein ligase SlrP (765 aa).

An interaction with target proteins region spans residues 1-451 (MFNITNIQST…VDYQGPRVLF (451 aa)). 10 LRR repeats span residues 200-219 (QITT…ENLQ), 221-242 (NIKT…LPDT), 243-262 (IQEM…RLPS), 263-284 (ALQS…LPEE), 285-305 (LRYL…LPSG), 306-325 (ITHL…TLPP), 326-346 (GLKT…SLPP), 347-368 (ELQV…LPPT), 369-389 (ITTL…LPAA), and 390-410 (LQIM…LPHF). The linker stretch occupies residues 452 to 461 (AMGDFSIVRV). The interval 462-765 (TRPLHQAVQG…VSSLMSAYWR (304 aa)) is E3 ubiquitin-protein ligase catalytic domain. Positions 464–758 (PLHQAVQGWL…NILLKKEVSS (295 aa)) constitute an NEL domain. The active-site Glycyl thioester intermediate is the Cys546.

Belongs to the LRR-containing bacterial E3 ligase family. As to quaternary structure, interacts with host TXN. Post-translationally, ubiquitinated in the presence of host E1 ubiquitin-activating enzyme, E2 ubiquitin-conjugating enzyme and ubiquitin.

The protein resides in the secreted. It localises to the host cytoplasm. The catalysed reaction is S-ubiquitinyl-[E2 ubiquitin-conjugating enzyme]-L-cysteine + [acceptor protein]-L-lysine = [E2 ubiquitin-conjugating enzyme]-L-cysteine + N(6)-ubiquitinyl-[acceptor protein]-L-lysine.. Binding to TXN is inhibited by hydrogen peroxide in vitro. Its function is as follows. Effector proteins function to alter host cell physiology and promote bacterial survival in host tissues. This protein is an E3 ubiquitin ligase that interferes with host's ubiquitination pathway. Can ubiquitinate both ubiquitin and host TXN (thioredoxin). Leads to significant decrease of thioredoxin activity and increase of host cell death. The chain is E3 ubiquitin-protein ligase SlrP (slrP) from Salmonella typhimurium (strain LT2 / SGSC1412 / ATCC 700720).